The primary structure comprises 499 residues: Ribulose bisphosphate carboxylase large chain (499 aa).

Substrate contacts are provided by Asn139 and Thr189. Residue Lys191 is the Proton acceptor of the active site. Lys193 is a binding site for substrate. Mg(2+) contacts are provided by Lys217, Asp219, and Glu220. Lys217 is modified (N6-carboxylysine). Catalysis depends on His309, which acts as the Proton acceptor. Positions 310, 342, and 394 each coordinate substrate.

Belongs to the RuBisCO large chain family. Type I subfamily. In terms of assembly, heterohexadecamer of 8 large chains and 8 small chains. Requires Mg(2+) as cofactor.

The catalysed reaction is 2 (2R)-3-phosphoglycerate + 2 H(+) = D-ribulose 1,5-bisphosphate + CO2 + H2O. It carries out the reaction D-ribulose 1,5-bisphosphate + O2 = 2-phosphoglycolate + (2R)-3-phosphoglycerate + 2 H(+). In terms of biological role, ruBisCO catalyzes two reactions: the carboxylation of D-ribulose 1,5-bisphosphate, the primary event in carbon dioxide fixation, as well as the oxidative fragmentation of the pentose substrate. Both reactions occur simultaneously and in competition at the same active site. The polypeptide is Ribulose bisphosphate carboxylase large chain (Paraburkholderia xenovorans (strain LB400)).